Consider the following 116-residue polypeptide: Nucleoid-associated protein SACE_0254 (116 aa).

A disordered region spans residues 90 to 116 (LQQEKMGPVTGALGGGQGLGGLGLPGL). Residues 101–116 (ALGGGQGLGGLGLPGL) show a composition bias toward gly residues.

It belongs to the YbaB/EbfC family. As to quaternary structure, homodimer.

The protein localises to the cytoplasm. It localises to the nucleoid. Its function is as follows. Binds to DNA and alters its conformation. May be involved in regulation of gene expression, nucleoid organization and DNA protection. The protein is Nucleoid-associated protein SACE_0254 of Saccharopolyspora erythraea (strain ATCC 11635 / DSM 40517 / JCM 4748 / NBRC 13426 / NCIMB 8594 / NRRL 2338).